We begin with the raw amino-acid sequence, 504 residues long: ATP synthase subunit alpha (504 aa).

Position 169-176 (169-176) interacts with ATP; that stretch reads GDRKTGKT.

The protein belongs to the ATPase alpha/beta chains family. F-type ATPases have 2 components, CF(1) - the catalytic core - and CF(0) - the membrane proton channel. CF(1) has five subunits: alpha(3), beta(3), gamma(1), delta(1), epsilon(1). CF(0) has three main subunits: a(1), b(2) and c(9-12). The alpha and beta chains form an alternating ring which encloses part of the gamma chain. CF(1) is attached to CF(0) by a central stalk formed by the gamma and epsilon chains, while a peripheral stalk is formed by the delta and b chains.

The protein localises to the cell membrane. The catalysed reaction is ATP + H2O + 4 H(+)(in) = ADP + phosphate + 5 H(+)(out). Its function is as follows. Produces ATP from ADP in the presence of a proton gradient across the membrane. The alpha chain is a regulatory subunit. The sequence is that of ATP synthase subunit alpha from Lactiplantibacillus plantarum (strain ATCC BAA-793 / NCIMB 8826 / WCFS1) (Lactobacillus plantarum).